Reading from the N-terminus, the 436-residue chain is Histidinol dehydrogenase (436 aa).

Residues Tyr135, Gln196, and Asn219 each coordinate NAD(+). Ser242, Gln264, and His267 together coordinate substrate. The Zn(2+) site is built by Gln264 and His267. Active-site proton acceptor residues include Glu332 and His333. The substrate site is built by His333, Asp366, Glu420, and His425. Asp366 lines the Zn(2+) pocket. His425 provides a ligand contact to Zn(2+).

The protein belongs to the histidinol dehydrogenase family. The cofactor is Zn(2+).

It carries out the reaction L-histidinol + 2 NAD(+) + H2O = L-histidine + 2 NADH + 3 H(+). It participates in amino-acid biosynthesis; L-histidine biosynthesis; L-histidine from 5-phospho-alpha-D-ribose 1-diphosphate: step 9/9. Its function is as follows. Catalyzes the sequential NAD-dependent oxidations of L-histidinol to L-histidinaldehyde and then to L-histidine. The protein is Histidinol dehydrogenase of Methylococcus capsulatus (strain ATCC 33009 / NCIMB 11132 / Bath).